Reading from the N-terminus, the 211-residue chain is Glutathione S-transferase class-mu 28 kDa isozyme (211 aa).

Positions 4–86 (DHIKVIYFNG…YMAKKHHMMG (83 aa)) constitute a GST N-terminal domain. Glutathione-binding residues include tyrosine 10, arginine 16, tryptophan 41, lysine 45, leucine 53, glutamate 70, serine 71, and aspartate 104. The 124-residue stretch at 88-211 (TDEEYYNVEK…YLSDRAATPF (124 aa)) folds into the GST C-terminal domain.

Belongs to the GST superfamily. Mu family. In terms of assembly, homodimer.

The catalysed reaction is RX + glutathione = an S-substituted glutathione + a halide anion + H(+). Conjugation of reduced glutathione to a wide number of exogenous and endogenous hydrophobic electrophiles. Its function is as follows. GST isoenzymes appear to play a central role in the parasite detoxification system. Other functions are also suspected including a role in increasing the solubility of haematin in the parasite gut. In Schistosoma bovis (Blood fluke), this protein is Glutathione S-transferase class-mu 28 kDa isozyme.